The following is a 275-amino-acid chain: Tropinone reductase-like 2 (275 aa).

Residue 17–41 (IITGGASGIGACTAELFHENGAKVV) participates in NAD(+) binding. Ser-150 is a binding site for substrate. Tyr-163 functions as the Proton acceptor in the catalytic mechanism.

It belongs to the short-chain dehydrogenases/reductases (SDR) family.

Has no tropinone reductase activity. This Erythroxylum coca (Coca plant) protein is Tropinone reductase-like 2.